The sequence spans 162 residues: Lipid droplet assembly factor 1-A (162 aa).

Over 1–42 (MASAENLYQEKMQELQKQMNKVMQTINNHSKVEAFLNSPFGQ) the chain is Cytoplasmic. The helical transmembrane segment at 43–63 (YLDQHPFVTLSLLVFISLSAV) threads the bilayer. Topologically, residues 64 to 65 (PV) are lumenal. The chain crosses the membrane as a helical span at residues 66-86 (GIFLTLIAGTAIAVCLAVLII). E87 is a topological domain (cytoplasmic). A helical membrane pass occupies residues 88-108 (GIVISVGGIALLCILCGLAVM). S109 is a topological domain (lumenal). A helical transmembrane segment spans residues 110–130 (LGVAAVLCVSYVAGSSVLNYI). Residues 131–162 (HAYRVTVGTRGRSGPISLNHETTTAEKSYRSS) are Cytoplasmic-facing.

It belongs to the LDAF1 family.

The protein resides in the endoplasmic reticulum membrane. It localises to the lipid droplet. Plays an important role in the formation of lipid droplets (LD) which are storage organelles at the center of lipid and energy homeostasis. The protein is Lipid droplet assembly factor 1-A of Xenopus laevis (African clawed frog).